The chain runs to 370 residues: Leucine-rich repeat and transmembrane domain-containing protein 2 (370 aa).

The first 35 residues, 1-35, serve as a signal peptide directing secretion; that stretch reads MLAPGSSPGQRGRLALQWRQVSWITCWIALYAVEA. Residues 36-68 enclose the LRRNT domain; it reads LPTCPFSCKCDSRSLEVDCSGLGLTTVPPDVPA. The Extracellular segment spans residues 36 to 310; that stretch reads LPTCPFSCKC…PASVRRAMGT (275 aa). 5 LRR repeats span residues 69-90, 93-114, 117-139, 141-162, and 165-186; these read ATRT…AFAN, SLQR…IFGD, NLTE…LRHS, LLRH…LFDG, and ALRS…TFEP. Residue Asn-90 is glycosylated (N-linked (GlcNAc...) asparagine). N-linked (GlcNAc...) asparagine glycans are attached at residues Asn-117 and Asn-125. One can recognise an LRRCT domain in the interval 198–252; the sequence is NPWECDCNLREFKHWMEWFSYRGGRLDQLACTLPKELRGKDMRMVPMEMFNYCSQ. N-linked (GlcNAc...) asparagine glycosylation is present at Asn-257. Residues 261-300 are disordered; the sequence is GLDIPGPPCTKASPEPAKPKPGAEPEPEPSTACPQKQRHR. Residues 311 to 331 form a helical membrane-spanning segment; the sequence is VIIAGVVCGVVCIMMVVAAAY. The Cytoplasmic portion of the chain corresponds to 332–370; that stretch reads GCIYASLMAKYHRELKKRQPLMGDPEGEHEDQKQISSVA. The segment at 351-370 is disordered; the sequence is PLMGDPEGEHEDQKQISSVA.

The protein localises to the membrane. This is Leucine-rich repeat and transmembrane domain-containing protein 2 (LRTM2) from Homo sapiens (Human).